We begin with the raw amino-acid sequence, 164 residues long: Crossover junction endodeoxyribonuclease RuvC (164 aa).

Active-site residues include Asp7, Glu67, and Asp139. Residues Asp7, Glu67, and Asp139 each coordinate Mg(2+).

This sequence belongs to the RuvC family. As to quaternary structure, homodimer which binds Holliday junction (HJ) DNA. The HJ becomes 2-fold symmetrical on binding to RuvC with unstacked arms; it has a different conformation from HJ DNA in complex with RuvA. In the full resolvosome a probable DNA-RuvA(4)-RuvB(12)-RuvC(2) complex forms which resolves the HJ. Mg(2+) serves as cofactor.

Its subcellular location is the cytoplasm. It carries out the reaction Endonucleolytic cleavage at a junction such as a reciprocal single-stranded crossover between two homologous DNA duplexes (Holliday junction).. In terms of biological role, the RuvA-RuvB-RuvC complex processes Holliday junction (HJ) DNA during genetic recombination and DNA repair. Endonuclease that resolves HJ intermediates. Cleaves cruciform DNA by making single-stranded nicks across the HJ at symmetrical positions within the homologous arms, yielding a 5'-phosphate and a 3'-hydroxyl group; requires a central core of homology in the junction. The consensus cleavage sequence is 5'-(A/T)TT(C/G)-3'. Cleavage occurs on the 3'-side of the TT dinucleotide at the point of strand exchange. HJ branch migration catalyzed by RuvA-RuvB allows RuvC to scan DNA until it finds its consensus sequence, where it cleaves and resolves the cruciform DNA. This chain is Crossover junction endodeoxyribonuclease RuvC, found in Citrifermentans bemidjiense (strain ATCC BAA-1014 / DSM 16622 / JCM 12645 / Bem) (Geobacter bemidjiensis).